Here is a 214-residue protein sequence, read N- to C-terminus: Glutathione S-transferase F12 (214 aa).

The GST N-terminal domain maps to Val-2–Gly-82. Glutathione is bound by residues Ala-11–Ala-12, Gln-40–Lys-41, Gln-53–Val-54, and Glu-66–Ser-67. A GST C-terminal domain is found at Ser-89–His-214.

Belongs to the GST superfamily. Phi family.

The protein localises to the cytoplasm. Its subcellular location is the cytosol. It catalyses the reaction RX + glutathione = an S-substituted glutathione + a halide anion + H(+). In terms of biological role, involved in the transport and/or accumulation of both anthocyanins and proanthocyanidins (PA)s in the vacuole. Functions in the cytosol to maintain the regular accumulation in the vacuole of PA precursors, such as epicatechin and glycosylated epicatechin. The sequence is that of Glutathione S-transferase F12 from Arabidopsis thaliana (Mouse-ear cress).